Reading from the N-terminus, the 488-residue chain is Coagulation factor X (488 aa).

The signal sequence occupies residues 1–31; that stretch reads MGRPLHLVLLSASLAGLLLLGESLFIRREQA. A propeptide spanning residues 32–40 is cleaved from the precursor; the sequence is NNILARVTR. The Gla domain occupies 41–85; that stretch reads ANSFLEEMKKGHLERECMEETCSYEEAREVFEDSDKTNEFWNKYK. A 4-carboxyglutamate mark is found at Glu46, Glu47, Glu54, Glu56, Glu59, Glu60, Glu65, Glu66, Glu69, Glu72, and Glu79. The cysteines at positions 57 and 62 are disulfide-linked. Residues 86–122 form the EGF-like 1; calcium-binding domain; that stretch reads DGDQCETSPCQNQGKCKDGLGEYTCTCLEGFEGKNCE. Cystine bridges form between Cys90–Cys101, Cys95–Cys110, Cys112–Cys121, Cys129–Cys140, Cys136–Cys149, Cys151–Cys164, Cys172–Cys342, Cys241–Cys246, Cys261–Cys277, Cys390–Cys404, and Cys415–Cys443. At Asp103 the chain carries (3R)-3-hydroxyaspartate. The 41-residue stretch at 125-165 folds into the EGF-like 2 domain; the sequence is TRKLCSLDNGDCDQFCHEEQNSVVCSCARGYTLADNGKACI. The interval 183 to 203 is O-glycosylated at one site; that stretch reads SVAQATSSSGEAPDSITWKPY. The propeptide at 183-234 is activation peptide; it reads SVAQATSSSGEAPDSITWKPYDAADLDPTENPFDLLDFNQTQPERGDNNLTR. O-linked (GalNAc...) threonine glycosylation is found at Thr199 and Thr211. 2 N-linked (GlcNAc...) asparagine glycosylation sites follow: Asn221 and Asn231. The region spanning 235-467 is the Peptidase S1 domain; the sequence is IVGGQECKDG…FLKWIDRSMK (233 aa). Residues His276 and Asp322 each act as charge relay system in the active site. The active-site Charge relay system is Ser419. Positions 476-485 are O-glycosylated at one site; it reads SHAPEVITSS.

Belongs to the peptidase S1 family. The two chains are formed from a single-chain precursor by the excision of two Arg residues and are held together by 1 or more disulfide bonds. Forms a heterodimer with SERPINA5. Interacts (inactive and activated) with ixolaris, an anticoagulant protein from Ixodes scapularis saliva. Interacts (activated) with iripin-8, a serine protease inhibitor from Ixodes ricinus saliva. Interacts (activated) with FXa-directed anticoagulant from Aedes albopictus saliva. Interacts (activated) with guianensin, an anticoagulant protein from Simulium guianense saliva. Interacts (activated) with simukunin, an anticoagulant protein from Simulium vittatum saliva. Post-translationally, the vitamin K-dependent, enzymatic carboxylation of some glutamate residues allows the modified protein to bind calcium. N- and O-glycosylated. O-glycosylated with core 1 or possibly core 8 glycans. In terms of processing, proteolytically cleaved and activated by cathepsin CTSG. The activation peptide is cleaved by factor IXa (in the intrinsic pathway), or by factor VIIa (in the extrinsic pathway). Post-translationally, the iron and 2-oxoglutarate dependent 3-hydroxylation of aspartate and asparagine is (R) stereospecific within EGF domains. In terms of tissue distribution, plasma; synthesized in the liver.

Its subcellular location is the secreted. It catalyses the reaction Selective cleavage of Arg-|-Thr and then Arg-|-Ile bonds in prothrombin to form thrombin.. Inhibited by SERPINA5 and SERPINA10. Factor Xa is a vitamin K-dependent glycoprotein that converts prothrombin to thrombin in the presence of factor Va, calcium and phospholipid during blood clotting. Factor Xa activates pro-inflammatory signaling pathways in a protease-activated receptor (PAR)-dependent manner. Up-regulates expression of protease-activated receptors (PARs) F2R, F2RL1 and F2RL2 in dermal microvascular endothelial cells. Triggers the production of pro-inflammatory cytokines, such as MCP-1/CCL2 and IL6, in cardiac fibroblasts and umbilical vein endothelial cells in PAR-1/F2R-dependent manner. Triggers the production of pro-inflammatory cytokines, such as MCP-1/CCL2, IL6, TNF-alpha/TNF, IL-1beta/IL1B, IL8/CXCL8 and IL18, in endothelial cells and atrial tissues. Induces expression of adhesion molecules, such as ICAM1, VCAM1 and SELE, in endothelial cells and atrial tissues. Increases expression of phosphorylated ERK1/2 in dermal microvascular endothelial cells and atrial tissues. Triggers activation of the transcription factor NF-kappa-B in dermal microvascular endothelial cells and atrial tissues. Activates pro-inflammatory and pro-fibrotic responses in dermal fibroblasts and enhances wound healing probably via PAR-2/F2RL1-dependent mechanism. Activates barrier protective signaling responses in endothelial cells in PAR-2/F2RL1-dependent manner; the activity depends on the cleavage of PAR-2/F2RL1 by factor Xa. Up-regulates expression of plasminogen activator inhibitor 1 (SERPINE1) in atrial tissues. The polypeptide is Coagulation factor X (F10) (Homo sapiens (Human)).